Consider the following 531-residue polypeptide: Chaperonin GroEL 2 (531 aa).

ATP contacts are provided by residues 30 to 33, 87 to 91, G414, and D494; these read TLGP and DGTTT.

The protein belongs to the chaperonin (HSP60) family. In terms of assembly, forms a cylinder of 14 subunits composed of two heptameric rings stacked back-to-back. Interacts with the co-chaperonin GroES.

It is found in the cytoplasm. It catalyses the reaction ATP + H2O + a folded polypeptide = ADP + phosphate + an unfolded polypeptide.. Together with its co-chaperonin GroES, plays an essential role in assisting protein folding. The GroEL-GroES system forms a nano-cage that allows encapsulation of the non-native substrate proteins and provides a physical environment optimized to promote and accelerate protein folding. In Cutibacterium acnes (strain DSM 16379 / KPA171202) (Propionibacterium acnes), this protein is Chaperonin GroEL 2.